We begin with the raw amino-acid sequence, 297 residues long: Homoserine kinase (297 aa).

82-92 lines the ATP pocket; it reads PVSRGLGSSAA.

This sequence belongs to the GHMP kinase family. Homoserine kinase subfamily.

The protein resides in the cytoplasm. It carries out the reaction L-homoserine + ATP = O-phospho-L-homoserine + ADP + H(+). The protein operates within amino-acid biosynthesis; L-threonine biosynthesis; L-threonine from L-aspartate: step 4/5. In terms of biological role, catalyzes the ATP-dependent phosphorylation of L-homoserine to L-homoserine phosphate. This Clostridium botulinum (strain ATCC 19397 / Type A) protein is Homoserine kinase.